The primary structure comprises 142 residues: Potassium voltage-gated channel subfamily E regulatory beta subunit 5 (142 aa).

N-linked (GlcNAc...) asparagine glycosylation is found at Asn2 and Asn25. The chain crosses the membrane as a helical span at residues 61–81; it reads LYILLIMIFYACLAGGLILAY. The Cytoplasmic segment spans residues 82-142; sequence TRSRKLVEAK…PALAQGAERV (61 aa). The tract at residues 119–142 is disordered; it reads SQAEGRRQLASEGLPALAQGAERV.

Belongs to the potassium channel KCNE family. Interacts with KCNQ1; impairs KCNQ1 localization in lipid rafts and only conducts current upon strong and continued depolarization. Highly expressed in heart, skeletal muscle, brain, spinal cord and placenta.

It localises to the membrane. Potassium channel ancillary subunit that is essential for generation of some native K(+) currents by virtue of formation of heteromeric ion channel complex with voltage-gated potassium (Kv) channel pore-forming alpha subunits. Functions as an inhibitory beta-subunit of the repolarizing cardiac potassium ion channel KCNQ1. This is Potassium voltage-gated channel subfamily E regulatory beta subunit 5 (KCNE5) from Homo sapiens (Human).